The primary structure comprises 1765 residues: RANBP2-like and GRIP domain-containing protein 8 (1765 aa).

Threonine 19 bears the Phosphothreonine mark. Serine 21 carries the phosphoserine modification. TPR repeat units lie at residues 26 to 59, 60 to 93, and 648 to 681; these read SMKGFYFAKLYYEAKEYDLAKKYICTYINVQERD, PKAHRFLGLLYELEENTEKAVECYRRSVELNPTQ, and EDAHITFAILDAVNGNIEDAVTAFESIKSVVSYW. Positions 760-804 are disordered; sequence GPLYKNGSLRNADSEIKHSTPSPTKYSLSPSKSYKYSPETPPRWT. Low complexity predominate over residues 778-797; sequence STPSPTKYSLSPSKSYKYSP. The region spanning 1036–1172 is the RanBD1 1 domain; it reads HFEPVVQMPE…FEECQRLLLD (137 aa). Disordered stretches follow at residues 1216-1247 and 1306-1330; these read TEEENKGSGTGVAGASDTTIKPNAENTGPTLE and AKLNQSGTSVGTDEESVVTQEEERD. Polar residues predominate over residues 1231 to 1244; that stretch reads SDTTIKPNAENTGP. A compositionally biased stretch (acidic residues) spans 1317–1329; that stretch reads TDEESVVTQEEER. The region spanning 1333 to 1469 is the RanBD1 2 domain; sequence YFEPVVPLPD…FDEAKTAQEK (137 aa). A compositionally biased stretch (polar residues) spans 1580 to 1593; that stretch reads NNSETSSVAQSGSE. Disordered regions lie at residues 1580 to 1621 and 1746 to 1765; these read NNSE…KNLS and KGKLAAVAQDEEENPSRSSG. A compositionally biased stretch (basic and acidic residues) spans 1594-1617; that stretch reads SKVEPKKCELSKNSDIEQSSDSKV. The GRIP domain occupies 1702–1752; it reads REKSAANLEYLKNVLLQFIFLKPGSERERLLPVINTMLQLSPEEKGKLAAV.

Interacts with GTP-bound ARL1.

The sequence is that of RANBP2-like and GRIP domain-containing protein 8 (RGPD8) from Homo sapiens (Human).